The sequence spans 203 residues: Ribosomal RNA large subunit methyltransferase E (203 aa).

5 residues coordinate S-adenosyl-L-methionine: Gly-51, Trp-53, Asp-69, Asp-85, and Asp-108. Lys-148 serves as the catalytic Proton acceptor.

It belongs to the class I-like SAM-binding methyltransferase superfamily. RNA methyltransferase RlmE family.

The protein localises to the cytoplasm. It catalyses the reaction uridine(2552) in 23S rRNA + S-adenosyl-L-methionine = 2'-O-methyluridine(2552) in 23S rRNA + S-adenosyl-L-homocysteine + H(+). In terms of biological role, specifically methylates the uridine in position 2552 of 23S rRNA at the 2'-O position of the ribose in the fully assembled 50S ribosomal subunit. The polypeptide is Ribosomal RNA large subunit methyltransferase E (Methanocorpusculum labreanum (strain ATCC 43576 / DSM 4855 / Z)).